Consider the following 116-residue polypeptide: Large ribosomal subunit protein bL20 (116 aa).

This sequence belongs to the bacterial ribosomal protein bL20 family.

Its function is as follows. Binds directly to 23S ribosomal RNA and is necessary for the in vitro assembly process of the 50S ribosomal subunit. It is not involved in the protein synthesizing functions of that subunit. The polypeptide is Large ribosomal subunit protein bL20 (Thermosynechococcus vestitus (strain NIES-2133 / IAM M-273 / BP-1)).